The primary structure comprises 494 residues: MLMNWDERRVKIVEELRKNGIEPYPHKYEVTHLIKDIKLIAKSQGNKSHEPFMFNISTAGRVANIRRHGKASFVDIFDEGEKLQLYMRVDELKEKYDKFFIYVGRGDIIGVKGDLFYTMKGELSLLVKDYQLLSKALIEPPDWSKLSPEFRYAHRYVDFLYNDNARKAMEIRYTIIREIREFLYSKGFIEVETPIVQPVYGGALAKPFKTHVNYLNEDWYLRIALELYLKRYIIGGFNKVFEIGKVFRNEDIDVTHNPEFTLLELYWAYADYNDIMNLTEDLLKSVVKKVTNSTKIVYGKYEIDFEGPFKRISMYDSLSEILGKDVESMSDNELKELMKKYNLTPRGNQYVRGLMIEKLFDKLVTPTLTNPTFITDYPIETTPLCKPHRNKPGLVERFEMFIAGMEVANAYTELNDPILQDKLFREEQEMFRRGDEEAHPYDKDFVRALSYGMPPTGGLGIGIDRIVMLVTNNYSIKEVIPFPMISSKVILEDD.

The Mg(2+) site is built by Glu-399 and Glu-406.

Belongs to the class-II aminoacyl-tRNA synthetase family. Mg(2+) is required as a cofactor.

It localises to the cytoplasm. It catalyses the reaction tRNA(Lys) + L-lysine + ATP = L-lysyl-tRNA(Lys) + AMP + diphosphate. In Saccharolobus solfataricus (strain ATCC 35092 / DSM 1617 / JCM 11322 / P2) (Sulfolobus solfataricus), this protein is Lysine--tRNA ligase (lysS).